Consider the following 135-residue polypeptide: Large ribosomal subunit protein mL54 (135 aa).

The N-terminal 14 residues, 1-14 (MAAAHLLRASRVWA), are a transit peptide targeting the mitochondrion.

This sequence belongs to the mitochondrion-specific ribosomal protein mL54 family. As to quaternary structure, component of the mitochondrial ribosome large subunit (39S) which comprises a 16S rRNA and about 50 distinct proteins.

The protein localises to the mitochondrion. This chain is Large ribosomal subunit protein mL54 (Mrpl54), found in Mus musculus (Mouse).